A 481-amino-acid chain; its full sequence is Replication factor C large subunit (481 aa).

43 to 50 (GKPGIGKT) contributes to the ATP binding site. 2 stretches are compositionally biased toward basic and acidic residues: residues 408–433 (KVER…KDAD) and 441–457 (VPKE…ERPA). Positions 408-481 (KVEREKEPEP…HNQSTLFDGF (74 aa)) are disordered. The span at 471-481 (AHNQSTLFDGF) shows a compositional bias: polar residues.

The protein belongs to the activator 1 small subunits family. RfcL subfamily. In terms of assembly, heteromultimer composed of small subunits (RfcS) and large subunits (RfcL).

In terms of biological role, part of the RFC clamp loader complex which loads the PCNA sliding clamp onto DNA. The sequence is that of Replication factor C large subunit from Methanoregula boonei (strain DSM 21154 / JCM 14090 / 6A8).